We begin with the raw amino-acid sequence, 347 residues long: MILISDATLRDGNHAIRHQLSAAQIHAYARAADEAGIDVVEVGHGNGLGGSSCLLGQTPISDRLMLETARAALRTSRLGVHFIPGLGKAADISLALEIGVDVVRVATHCTEANVSARFIEQTRAAGRTAFGVLMMSHMAPPDALLAQAKLMERYGAQAVVLMDSAGYSTPSLVRAKVERLVDGLDIDVGFHAHNNLGLAVANSLVALEAGARIVDACVKGFGAGAGNTQLETLVAAMEREGHDTRTTFERVMTLARGTETFLNPKTPHIQPANIASGLYGLFSGYVPHIQKAAQEFGVNEFELYKRLAERKLVAGQEDIIIEEASRLARERDVQRATGGVRVRELSA.

The Pyruvate carboxyltransferase domain occupies 2–252 (ILISDATLRD…DTRTTFERVM (251 aa)). Substrate is bound at residue 10 to 11 (RD). Asp-11 is a Mn(2+) binding site. His-14 (proton acceptor) is an active-site residue. Positions 164 and 191 each coordinate substrate. Mn(2+)-binding residues include His-191 and His-193.

This sequence belongs to the 4-hydroxy-2-oxovalerate aldolase family.

The enzyme catalyses (S)-4-hydroxy-2-oxopentanoate = acetaldehyde + pyruvate. The polypeptide is 4-hydroxy-2-oxovalerate aldolase (mhpE) (Burkholderia pseudomallei (strain K96243)).